Here is a 336-residue protein sequence, read N- to C-terminus: HTH-type transcriptional repressor PurR (336 aa).

One can recognise an HTH lacI-type domain in the interval 2-56 (ATIKDVAKMAGVSTTTVSHVINKTRFVAKDTEEAVLSAIKQLNYSPSAVARSLKV). The H-T-H motif DNA-binding region spans 4–23 (IKDVAKMAGVSTTTVSHVIN). A DNA-binding region spans residues 48-56 (SAVARSLKV). Hypoxanthine contacts are provided by tyrosine 73, lysine 188, threonine 190, phenylalanine 219, and aspartate 273.

In terms of assembly, homodimer.

It functions in the pathway purine metabolism; purine nucleotide biosynthesis [regulation]. Is the main repressor of the genes involved in the de novo synthesis of purine nucleotides, regulating purB, purC, purEK, purF, purHD, purL, purMN and guaBA expression. PurR is allosterically activated to bind its cognate DNA by binding the purine corepressors, hypoxanthine or guanine, thereby effecting transcription repression. This chain is HTH-type transcriptional repressor PurR, found in Haemophilus influenzae (strain PittGG).